We begin with the raw amino-acid sequence, 484 residues long: Tribbles (484 aa).

A compositionally biased stretch (polar residues) spans methionine 1–tyrosine 23. Positions methionine 1 to glutamate 51 are disordered. Over residues serine 24 to serine 49 the composition is skewed to low complexity. The Protein kinase domain maps to tyrosine 129–leucine 397. Acidic residues-rich tracts occupy residues alanine 420–glycine 437 and proline 475–glycine 484. Disordered regions lie at residues alanine 420 to aspartate 443 and methionine 464 to glycine 484.

This sequence belongs to the protein kinase superfamily. CAMK Ser/Thr protein kinase family. Tribbles subfamily. In terms of assembly, interacts with slbo. Interacts with Akt1. Expressed throughout the brain with highest levels of expression detected in the cell body rind and lower levels of expression detected in the neurophil (at protein level).

The protein localises to the nucleus. It localises to the cytoplasm. The protein resides in the cell cortex. Adapter protein that negatively regulates different signaling pathways to coordinate cell differentiation, proliferation, migration and growth. Functions by binding to key regulatory proteins and either blocks their activity or regulates their turnover by the proteasome. In various developing tissues functions as a cell cycle regulator that mediates cell proliferation according to the requirements of the developmental program. Acts by inducing the proteasomal degradation of the CD25 mitotic activators stg and twe at critical stages of development to delay entry into mitosis and thus mediate cell proliferation. During gastrulation, negatively regulates stg to delay mitosis in the ventral region of the embryonic mesoderm thus allowing invagination to be completed before cell division takes place. Delaying stg-dependent mitosis during bristle development and in migrating germline pole cells also arrests their cell divisions, whereas in cystocytes it promotes their cell divisions. Involved in the regulation of the mid-blastula transition; promotes the destruction of twe resulting in the cell cycle arrest in G2 of cycle 14 which delays mitosis and thus reduces cell proliferation allowing cell fate specification and morphogenesis to take place. In germline cells, blocks border cell migration during oogenesis by binding to slbo/C/EBP and promoting its ubiquitination and degradation by the proteasome. May function in a negative feedback loop with slbo to coordinate proper border cell migration. During tissue growth negatively regulates insulin signaling by binding to Akt1 and blocking its phosphorylation-dependent activation. However it may also function downstream in the insulin signaling pathway, acting with Akt1 to direct foxo degradation. Essential for the proper formation of operant place and aversive olfactory memories. The chain is Tribbles from Drosophila melanogaster (Fruit fly).